The chain runs to 494 residues: Tetracenomycin biosynthesis bifunctional cyclase/O-methyl transferase TcmN (494 aa).

Residues 11-140 are polyketide cyclase; the sequence is VNAPFELVWD…TTTRANMERI (130 aa). The Proton acceptor; for cyclase activity role is filled by serine 67. Active-site proton donor; for cyclase activity residues include arginine 69 and arginine 82. Residues 169–494 are methyltransferase; it reads LLLAASGRLA…TWTTLECRPV (326 aa). Residues aspartate 358 and 384 to 386 contribute to the S-adenosyl-L-methionine site; that span reads GDF. Histidine 405 functions as the Proton acceptor; for methyltransferase activity in the catalytic mechanism.

In the C-terminal section; belongs to the class I-like SAM-binding methyltransferase superfamily. Cation-independent O-methyltransferase family. As to quaternary structure, the tetracenomycin polyketide synthase (TCM PKS) is composed of a ketosynthase complex (TcmKL), an acyl carrier protein (TcmM), a cyclase (TcmN) and a probable second cyclase (TcmJ). TcmN is a homodimer in solution.

It carries out the reaction 10 malonyl-CoA + 8 H(+) = tetracenomycin F2 + 10 CO2 + 10 CoA + 2 H2O. It participates in antibiotic biosynthesis; tetracenomycin C biosynthesis. Its function is as follows. Involved in the biosynthesis of tetracenomycin C (TCM C). Part of a type II polyketide synthase (PKS) that catalyzes the synthesis of tetracenomycin F2 (TCM F2), a precursor of TCM C, from malonyl-CoA. The TcmN N-terminal domain, when coupled with the other components of the PKS, catalyzes the cyclization and aromatization of the linear polyketide intermediate. Catalyzes the cyclization of the first and second rings. In addition, the C-terminal domain acts as a methyltransferase. It catalyzes the specific O-methylation of tetracenomycin D3 (TCM D3) to TCM B3, using S-adenosyl-L-methionine as the methyl donor. The chain is Tetracenomycin biosynthesis bifunctional cyclase/O-methyl transferase TcmN from Streptomyces glaucescens.